Consider the following 612-residue polypeptide: Phosphopentomutase (612 aa).

An N-acetylalanine modification is found at A2. The alpha-D-glucose 1,6-bisphosphate site is built by R63 and S165. Catalysis depends on S165, which acts as the Phosphoserine intermediate. Mg(2+) is bound by residues S165, D322, D324, and D326. S165 bears the Phosphoserine mark. Positions 326, 327, 400, 424, and 438 each coordinate alpha-D-glucose 1,6-bisphosphate.

It belongs to the phosphohexose mutase family. In terms of assembly, monomer. Requires Mg(2+) as cofactor.

The protein resides in the cytoplasm. Its subcellular location is the cytosol. The enzyme catalyses alpha-D-ribose 1-phosphate = D-ribose 5-phosphate. The catalysed reaction is 2-deoxy-alpha-D-ribose 1-phosphate = 2-deoxy-D-ribose 5-phosphate. It carries out the reaction alpha-D-glucose 1-phosphate = alpha-D-glucose 6-phosphate. It catalyses the reaction O-phospho-L-seryl-[protein] + alpha-D-glucose 1-phosphate = alpha-D-glucose 1,6-bisphosphate + L-seryl-[protein]. The enzyme catalyses alpha-D-glucose 1,6-bisphosphate + L-seryl-[protein] = O-phospho-L-seryl-[protein] + alpha-D-glucose 6-phosphate. In terms of biological role, catalyzes the conversion of the nucleoside breakdown products ribose-1-phosphate and deoxyribose-1-phosphate to the corresponding 5-phosphopentoses. Catalyzes the reversible isomerization of alpha-D-glucose 1-phosphate to alpha-D-glucose 6-phosphate but with a lower catalytic efficiency. The mechanism proceeds via the intermediate compound alpha-D-glucose 1,6-bisphosphate. In vitro, also has a low glucose 1,6-bisphosphate synthase activity which is most probably not physiologically relevant. The protein is Phosphopentomutase (PGM2) of Pongo abelii (Sumatran orangutan).